Reading from the N-terminus, the 532-residue chain is Sodium-dependent lysophosphatidylcholine symporter 1-A (532 aa).

At 1 to 40 the chain is on the cytoplasmic side; sequence MARGEGAEQFSSGLLPTAKSVTQNEIKMVKLPKQQERKRA. A helical membrane pass occupies residues 41-70; that stretch reads LTVWSKVCFAIGGAPYQITGTALGFFLQIF. Residues 71–81 are Extracellular-facing; that stretch reads LLDVAQLNPLN. Residues 82–102 form a helical membrane-spanning segment; the sequence is ASVILFVGRAWDAVTDPTVGF. Over 103–114 the chain is Cytoplasmic; the sequence is LVSRTPWTRHGR. The chain crosses the membrane as a helical span at residues 115-134; it reads MMPWILVSTIPAVLCYFLIW. Residues 135 to 144 lie on the Extracellular side of the membrane; the sequence is VVPPIEQGKM. The chain crosses the membrane as a helical span at residues 145-169; sequence MWYLLFYCLFQTLQTCFHVPYSALT. Residues 170 to 176 are Cytoplasmic-facing; the sequence is MFISTEQ. The helical transmembrane segment at 177-208 threads the bilayer; it reads RERDSATAYRMTVEVFGTVVGTAIQGQIVGMA. Residues 209 to 232 are Extracellular-facing; that stretch reads NTPCKNNTSPNNSSNDLIQSNNSH. Cys-212 and Cys-464 are disulfide-bonded. Asn-214, Asn-220, and Asn-229 each carry an N-linked (GlcNAc...) asparagine glycan. Residues 233-266 traverse the membrane as a helical segment; it reads IPLKSNIFDERCAYMIASAVISLIYVVCAAVLFF. Over 267–297 the chain is Cytoplasmic; sequence GVREQDVQGELKAQKRVSFQKGLRLVMGHGP. The chain crosses the membrane as a helical span at residues 298 to 324; sequence YVKLVLAFLFTSLAFMLLEGNFAVFIK. The Extracellular segment spans residues 325 to 335; the sequence is YTLGFREDFQN. A helical membrane pass occupies residues 336–354; it reads ILLVIMVSATVSIPMWQWF. The Cytoplasmic segment spans residues 355 to 358; that stretch reads LCRF. The chain crosses the membrane as a helical span at residues 359–380; sequence GKKTAVYIGITWAVPFMILVVS. Residues 381 to 383 are Extracellular-facing; sequence VNS. Residues 384–420 form a helical membrane-spanning segment; that stretch reads SLIVSYIVSIAAGVSVGAAFLLPWSMLPDVVDDFKLQ. Over 421 to 430 the chain is Cytoplasmic; that stretch reads NPTSQGHEAI. Residues 431 to 457 form a helical membrane-spanning segment; the sequence is FYSFYVFFTKFASGVSLGVSTLALSFA. The Extracellular portion of the chain corresponds to 458-469; it reads GYETGVCVQSDS. A helical transmembrane segment spans residues 470-493; that stretch reads VNLTLKLLVSAAPVSLIALGLLIF. Topologically, residues 494 to 532 are cytoplasmic; the sequence is MTYPIDEERREYNNKQLQLLLRNEEEEDEMEVLKPDITA.

This sequence belongs to the major facilitator superfamily. Expressed in the developing nervous system.

The protein resides in the cell membrane. Its subcellular location is the endoplasmic reticulum membrane. The enzyme catalyses a 1-acyl-sn-glycero-3-phosphocholine(in) + Na(+)(in) = a 1-acyl-sn-glycero-3-phosphocholine(out) + Na(+)(out). It carries out the reaction 1-(4Z,7Z,10Z,13Z,16Z,19Z-docosahexaenoyl)-sn-glycero-3-phosphocholine(in) + Na(+)(in) = 1-(4Z,7Z,10Z,13Z,16Z,19Z-docosahexaenoyl)-sn-glycero-3-phosphocholine(out) + Na(+)(out). The catalysed reaction is 1-(9Z-octadecenoyl)-sn-glycero-3-phosphocholine(in) + Na(+)(in) = 1-(9Z-octadecenoyl)-sn-glycero-3-phosphocholine(out) + Na(+)(out). It catalyses the reaction 1-hexadecanoyl-sn-glycero-3-phosphocholine(in) + Na(+)(in) = 1-hexadecanoyl-sn-glycero-3-phosphocholine(out) + Na(+)(out). The enzyme catalyses a 1-acyl-sn-glycero-3-phosphoethanolamine(in) + Na(+)(in) = a 1-acyl-sn-glycero-3-phosphoethanolamine(out) + Na(+)(out). Sodium-dependent lysophosphatidylcholine (LPC) symporter, which plays an essential role for blood-brain barrier formation and function. Specifically expressed in endothelium of the blood-brain barrier of micro-vessels and transports LPC into the brain. Transport of LPC is essential because it constitutes the major mechanism by which docosahexaenoic acid (DHA), an omega-3 fatty acid that is essential for normal brain growth and cognitive function, enters the brain. Transports LPC carrying long-chain fatty acids such LPC oleate and LPC palmitate with a minimum acyl chain length of 14 carbons. Does not transport docosahexaenoic acid in unesterified fatty acid. In Danio rerio (Zebrafish), this protein is Sodium-dependent lysophosphatidylcholine symporter 1-A (mfsd2aa).